A 167-amino-acid chain; its full sequence is Protein MIX23 (167 aa).

The disordered stretch occupies residues 81–108 (QLDQDRNTSKSPLKSQQQLPSSSTTQVS). Residues 89–106 (SKSPLKSQQQLPSSSTTQ) are compositionally biased toward low complexity.

This sequence belongs to the MIX23 family.

This chain is Protein MIX23 (cid2), found in Schizosaccharomyces pombe (strain 972 / ATCC 24843) (Fission yeast).